A 277-amino-acid chain; its full sequence is Energy-coupling factor transporter ATP-binding protein EcfA1 (277 aa).

Residues Leu5–Asp240 form the ABC transporter domain. Gly40 to Ser47 lines the ATP pocket.

This sequence belongs to the ABC transporter superfamily. Energy-coupling factor EcfA family. As to quaternary structure, forms a stable energy-coupling factor (ECF) transporter complex composed of 2 membrane-embedded substrate-binding proteins (S component), 2 ATP-binding proteins (A component) and 2 transmembrane proteins (T component).

It is found in the cell membrane. In terms of biological role, ATP-binding (A) component of a common energy-coupling factor (ECF) ABC-transporter complex. Unlike classic ABC transporters this ECF transporter provides the energy necessary to transport a number of different substrates. This Lactococcus lactis subsp. lactis (strain IL1403) (Streptococcus lactis) protein is Energy-coupling factor transporter ATP-binding protein EcfA1.